Consider the following 510-residue polypeptide: Protein fork head (510 aa).

Disordered regions lie at residues 1–62 (MQKL…SPLA) and 175–205 (AMPP…YRRS). Over residues 20-39 (SGGGGPPSGGGGGGGGGGGG) the composition is skewed to gly residues. Low complexity predominate over residues 47–60 (NNPNPTSNGGSMSP). 2 positions are modified to phosphoserine: S187 and S190. The segment at residues 209-300 (AKPPYSYISL…GNMFENGCYL (92 aa)) is a DNA-binding region (fork-head). Positions 309–359 (EKKEAIRQLHKSPSHSSLEATSPGKKDHEDSHHMHHHHHSRLDHHQHHKEA) are disordered. S320, S322, and S330 each carry phosphoserine. A compositionally biased stretch (basic residues) spans 341 to 356 (HMHHHHHSRLDHHQHH).

It localises to the nucleus. Its function is as follows. Fkh promotes terminal as opposed to segmental development. In the absence of fkh, this developmental switch does not occur. The nuclear localization of the fkh protein suggest that fkh regulates the transcription of other, subordinate, genes. This chain is Protein fork head (fkh), found in Drosophila melanogaster (Fruit fly).